Here is a 517-residue protein sequence, read N- to C-terminus: Cytochrome P450 monooxygenase TRI4 (517 aa).

Residues 15-37 (AVGAAVAVGALYFFCQCFYNLYL) traverse the membrane as a helical segment. Asparagine 444 carries N-linked (GlcNAc...) asparagine glycosylation. Cysteine 452 serves as a coordination point for heme.

It belongs to the cytochrome P450 family. Requires heme as cofactor.

It is found in the membrane. The protein operates within sesquiterpene biosynthesis; trichothecene biosynthesis. In terms of biological role, cytochrome P450 monooxygenase; part of the gene cluster that mediates the production of the antimicrobial trichothecene harzianum A (HA) that plays a role in Botrytis cinerea antagonistic activity and plant defense priming. The biosynthesis of harzianum A begins with the cyclization of farnesyl diphosphate to trichodiene and is catalyzed by the trichodiene synthase TRI5. Trichodiene undergoes a series of oxygenations catalyzed by the cytochrome P450 monooxygenase TRI4. TRI4 controls the addition of 3 oxygens at C-2, C-11, and the C-12, C-13-epoxide to form the intermediate isotrichodiol. Isotrichodiol then undergoes a non-enzymatic isomerization and cyclization to form 12,13-epoxytrichothec-9-ene (EPT) which is further converted to trichodermol by the cytochrome P450 monooxygenase TRI11 via C-4 hydroxylation. The last step of HA synthesis is esterification of an octatriendioyl moiety to the C-4 oxygen of trichodermol. The octatriendioyl moiety is probably produced by the polyketide synthase TRI17 and the esterification performed by the trichothecene O-acetyltransferase TRI3. This chain is Cytochrome P450 monooxygenase TRI4, found in Trichoderma arundinaceum.